Here is a 440-residue protein sequence, read N- to C-terminus: MIRTSSILKNCNYRYIHCIHRCLLNEANLKDRKTHNVERVSNEKTFEQALEEERKVFGELFEAGARVENMRHTNASKIIDKYYNGLQDNSEGTSVKKEKIVFNHSQRAQRKLPNKDHEFLKETAGNDYVYERAEPSAISTKTISEQTRTLLEKIFDEDNSINKSNRELLNLNLRKGSGMEALRQPVAHSNVKFSEEVMQEIGNKIRYQTTLDQVLEPHIDYLREAVKSDYDLLRYLKQSLDIYKKRNKDLELKMNAESSNIFEDIRSACINKPAELPKPLAMTLPYIIVKSLRLGDFDFPADRKYTLISYVYNECKNNMDASLYLTICNVDFYNLLVQLLWENFQEIRYLRRVVTEMSVNGVIGNIETVDILDKIVKEMRSLNEDVFLEAGEQLSADEEVSSSANKIVNVGVLWNKDTNNDLLIVENYLKSLKKNLTRDR.

The N-terminal 15 residues, 1–15 (MIRTSSILKNCNYRY), are a transit peptide targeting the mitochondrion.

It is found in the mitochondrion matrix. Required for the processing and/or for the stability of the CYTB and COX1 intron-containing pre-mRNAs and of the ATP6 transcript. Could be a stem-loop RNA-binding protein that plays a role in determining RNA stability. This is Mitochondrial translation factor 2 (MTF2) from Saccharomyces cerevisiae (strain ATCC 204508 / S288c) (Baker's yeast).